Here is an 861-residue protein sequence, read N- to C-terminus: Bifunctional uridylyltransferase/uridylyl-removing enzyme (861 aa).

Residues 1–321 form a uridylyltransferase region; it reads MKNDNRIIKN…VYHQKQKIIR (321 aa). Positions 322 to 678 are uridylyl-removing; that stretch reads LDDEFQLSNR…IMPHHSQGGT (357 aa). One can recognise an HD domain in the interval 440-562; the sequence is VDQHTLFVIR…LPHAKYLDYL (123 aa). ACT domains are found at residues 679–760 and 788–861; these read EVFI…AVSR and QLFL…KSKY.

Belongs to the GlnD family. Requires Mg(2+) as cofactor.

It carries out the reaction [protein-PII]-L-tyrosine + UTP = [protein-PII]-uridylyl-L-tyrosine + diphosphate. The enzyme catalyses [protein-PII]-uridylyl-L-tyrosine + H2O = [protein-PII]-L-tyrosine + UMP + H(+). Uridylyltransferase (UTase) activity is inhibited by glutamine, while glutamine activates uridylyl-removing (UR) activity. Its function is as follows. Modifies, by uridylylation and deuridylylation, the PII regulatory proteins (GlnB and homologs), in response to the nitrogen status of the cell that GlnD senses through the glutamine level. Under low glutamine levels, catalyzes the conversion of the PII proteins and UTP to PII-UMP and PPi, while under higher glutamine levels, GlnD hydrolyzes PII-UMP to PII and UMP (deuridylylation). Thus, controls uridylylation state and activity of the PII proteins, and plays an important role in the regulation of nitrogen assimilation and metabolism. This Legionella pneumophila (strain Lens) protein is Bifunctional uridylyltransferase/uridylyl-removing enzyme.